The chain runs to 147 residues: Cyclic di-AMP receptor B (147 aa).

The CBS domain maps to 18–78; sequence MIEADKVAHV…SIFGLERIEF (61 aa). 5 residues coordinate 3',3'-c-di-AMP: Lys-23, Ala-25, Thr-46, Ala-47, and Arg-131.

Homodimer. Forms a homodimer with a parallel, head-to-head assembly of the monomers. Under conditions of potassium starvation and corresponding low c-di-AMP levels, apo-DarB specifically interacts with the N-terminal region of the RelA. Under the same conditions, apo-DarB also specifically interacts with the C-terminal part of the pyruvate carboxylase.

Binds c-di-AMP. Binding of c-di-AMP to DarB inhibits the interaction with RelA and PYC. Involved in the c-di-AMP-dependent regulation of the bacterial stringent response. Modulates the activities of at least two enzymes under conditions of potassium limitation. Apo-DarB regulates the activity of the GTP pyrophosphokinase RelA by interacting directly with RelA, leading to stimulation of (p)ppGpp synthesis and induction of the stringent response. Apo-DarB also regulates pyruvate carboxylase (PYC) at two levels: directly at the protein level by binding to the enzyme and stimulating the synthesis of oxaloacetate and indirectly, by interaction with RelA, which leads to activation of the stringent response and to the increased expression of the pycA gene. Stimulation of these enzymes by DarB is prevented in the presence of cyclic di-AMP (c-di-AMP). This Bacillus subtilis (strain 168) protein is Cyclic di-AMP receptor B.